The chain runs to 1159 residues: Nucleoporin nup124 (1159 aa).

Positions 1 to 13 (MPPVSKNTRTSSK) are enriched in polar residues. Disordered regions lie at residues 1–28 (MPPVSKNTRTSSKTVKKPYDPPQGSSRP), 44–77 (FTSGLDEKASGTASKDRKSGRAGTKSLLTPELTP), 106–125 (HTNTFEPRKPKQKQDYTNSP), and 183–273 (TLNI…RRRR). Composition is skewed to basic and acidic residues over residues 48–62 (LDEKASGTASKDRKS) and 106–119 (HTNTFEPRKPKQKQ). Phosphoserine is present on S211. Positions 226–239 (NEPSAKQNKSFSGN) are enriched in polar residues. The span at 240–260 (DSHKSLTDIRDKENGETEVSA) shows a compositional bias: basic and acidic residues. Positions 263–273 (HVPHRSSRRRR) are enriched in basic residues. S380 bears the Phosphoserine mark. Over residues 426-441 (DNKTFEHQPLSKDTEA) the composition is skewed to basic and acidic residues. Disordered stretches follow at residues 426 to 715 (DNKT…NTEN), 746 to 780 (EEAVKQKETEKEVPPTGPKASEIKDSVSSNNAVPS), and 794 to 1159 (EKTN…RRKR). Residues 442–453 (PKSQFSSSPTKE) are compositionally biased toward polar residues. A Phosphoserine modification is found at S465. Residues 480 to 494 (FKFEPKTEATTDKKL) show a composition bias toward basic and acidic residues. Residues 528-549 (PSKTQETPSITENKPSFFSQLS) show a composition bias toward polar residues. S546 carries the post-translational modification Phosphoserine. Positions 550–560 (PKREETEKKDN) are enriched in basic and acidic residues. The span at 590–626 (PTFNFSLNNASSTQDTTKPTLQFNFGSSFGKPTSNIF) shows a compositional bias: polar residues. Low complexity predominate over residues 642 to 656 (ASESKPSAPESKPSS). Composition is skewed to polar residues over residues 657 to 672 (GFGNTAGSSPFSFNLT) and 696 to 715 (DSLSAKASTPFSFAKPNTEN). The segment covering 746 to 758 (EEAVKQKETEKEV) has biased composition (basic and acidic residues). Polar residues-rich tracts occupy residues 771–780 (SVSSNNAVPS) and 798–814 (ENNIPNDTTKTNGNATK). Over residues 815-824 (RTLEQTEDAK) the composition is skewed to basic and acidic residues. Residues 830-861 (FGSTTEQANKKASTSNETTKPQLDTSSKTDGV) are compositionally biased toward polar residues. Residues 863 to 879 (ANAPFSFASAFNAPKPS) are compositionally biased toward low complexity. The span at 880 to 908 (TNTADGKDSASNLTTPSPAFSFGNNSGVK) shows a compositional bias: polar residues. Positions 909-926 (ASSNNNPSTNSSTAPFSF) are enriched in low complexity. Residues 927-947 (GTSNKPAFSFGSATSKTTSEG) are compositionally biased toward polar residues. Low complexity predominate over residues 948–963 (TAPAASASAPAPTTSA). 5 stretches are compositionally biased toward polar residues: residues 1001–1019 (GANNSPQPASMFGTSTPAP), 1042–1064 (ITNTATNNPPSTGFTFTPSNAGS), 1074–1087 (NTPNPSGSINNASQ), 1095–1108 (EPSNPASNPPSTGF), and 1116–1144 (SAFNASASQSPAPNGIQFNLGSSNSQTNA).

To yeast nucleoporins NUP1 and NUP2.

It localises to the nucleus. The protein localises to the nuclear pore complex. Its function is as follows. Nucleoporins may be involved in both binding and translocation of the proteins during nucleocytoplasmic transport. In S.pombe it is required for the nuclear localization of retrotransposon tf1. This chain is Nucleoporin nup124 (nup124), found in Schizosaccharomyces pombe (strain 972 / ATCC 24843) (Fission yeast).